The following is an 804-amino-acid chain: MVRPAQVRALSGLARSATFVRLLPSQSQNALRCASLPVSRLGALPLRATTQITSAPLRQWHQIRNSSATATASLAEQAAADPEGLSQAEIISNIDAEEWKRISKVRNIGIAAHIDSGKTTATERVLFYTGRINAIHEVRGRDSVGAKMDSMDLEREKGITIQSAATFCDWVKKENGKEEKYHFNLIDTPGHIDFTIEVERALRVLDGAVMILCAVSGVQSQTITVDRQMKRYNVPRISFVNKMDRMGANPFKAIDQINNKLKLPAAAVQVPIGAEDEFQGVVDLIRMKAIYNEGPRGETIVEKDEIPEHIKPLAEERRRILIETLADVDDEIAEIFLDEREPTIEQIKAAIRRATIALKFTPVFMGSALADKSIQPMLDGVCDYLPNPSEVTNLALDQKRKEAQVKLLPYGSQPFVGLAFKLEESNFGQLTYIRVYQGTLRKGANVFNARNDKKVKVPRIVRMHSNEMEEVQEIGAGEICAVFGVDCASGDTFTDGQLAYTMSSMFVPEPVISLSIKPKNNKDSANFSKAMARFQREDPTFRVSYDTESEQTIISGMGELHLDIYVERMRREYKVDCETGQPQVAYRETIGRRVEFDHLLKKQSGGPGDYARVVGWMEPSESLEENKFEEQIVGGAISEKFLFACEKGFNLACEKGPLIGHKVLGTKMVINDGATHMTDSSEMSFKNATQQAFRKAFMESQPHVLEPLMKTVVTAPIEFQGDVIGLLNKRNATINDSEIGVDEFTVYADCSLNGMFGFSSHLRAATQGKGEYTMEFSHYEKAPGQLQKELVQKYLKAQADRHKK.

The N-terminal 9 residues, 1 to 9 (MVRPAQVRA), are a transit peptide targeting the mitochondrion. The region spanning 103-389 (SKVRNIGIAA…GVCDYLPNPS (287 aa)) is the tr-type G domain. Residues 112–119 (AHIDSGKT), 187–191 (DTPGH), and 241–244 (NKMD) contribute to the GTP site.

It belongs to the TRAFAC class translation factor GTPase superfamily. Classic translation factor GTPase family. EF-G/EF-2 subfamily.

It is found in the mitochondrion. Its pathway is protein biosynthesis; polypeptide chain elongation. Mitochondrial GTPase that catalyzes the GTP-dependent ribosomal translocation step during translation elongation. During this step, the ribosome changes from the pre-translocational (PRE) to the post-translocational (POST) state as the newly formed A-site-bound peptidyl-tRNA and P-site-bound deacylated tRNA move to the P and E sites, respectively. Catalyzes the coordinated movement of the two tRNA molecules, the mRNA and conformational changes in the ribosome. This is Elongation factor G, mitochondrial (mef1) from Talaromyces stipitatus (strain ATCC 10500 / CBS 375.48 / QM 6759 / NRRL 1006) (Penicillium stipitatum).